The chain runs to 101 residues: Biogenesis of lysosome-related organelles complex 1 subunit BLS1 (101 aa).

This sequence belongs to the BLOC1S1 family. Component of the biogenesis of lysosome-related organelles complex-1 (BLOC-1).

Its subcellular location is the endosome. Component of the biogenesis of lysosome-related organelles complex-1 (BLOC-1), a complex involved in endosomal cargo sorting. The protein is Biogenesis of lysosome-related organelles complex 1 subunit BLS1 (BLS1) of Zygosaccharomyces rouxii (strain ATCC 2623 / CBS 732 / NBRC 1130 / NCYC 568 / NRRL Y-229).